Reading from the N-terminus, the 352-residue chain is Carbohydrate sulfotransferase 11 (352 aa).

The Cytoplasmic segment spans residues 1–16; the sequence is MKPALLEVMRMNRICR. Residues 17–37 form a helical; Signal-anchor for type II membrane protein membrane-spanning segment; it reads MVLATCFGSFILVIFYFQSML. Residues 38-352 lie on the Lumenal side of the membrane; the sequence is HPVMRRNPFG…YSVPNYLKLD (315 aa). 3'-phosphoadenylyl sulfate-binding positions include 124 to 130 and 186 to 194; these read PKVACTN and REPFERLVS. Asparagine 205, asparagine 223, asparagine 321, and asparagine 342 each carry an N-linked (GlcNAc...) asparagine glycan.

The protein belongs to the sulfotransferase 2 family. Post-translationally, N-glycosylated; required for activity and stability. In terms of tissue distribution, predominantly expressed in brain and kidney. Also expressed at weaker level in heart, spleen and lung. Expressed in developing chondrocytes.

It localises to the golgi apparatus membrane. It catalyses the reaction chondroitin beta-D-glucuronate + n 3'-phosphoadenylyl sulfate = chondroitin 4'-sulfate + n adenosine 3',5'-bisphosphate + n H(+). Catalyzes the transfer of sulfate to position 4 of the N-acetylgalactosamine (GalNAc) residue of chondroitin. Chondroitin sulfate constitutes the predominant proteoglycan present in cartilage and is distributed on the surfaces of many cells and extracellular matrices. Can also sulfate Gal residues in desulfated dermatan sulfate. Preferentially sulfates in GlcA-&gt;GalNAc unit than in IdoA-&gt;GalNAc unit. Does not form 4, 6-di-O-sulfated GalNAc when chondroitin sulfate C is used as an acceptor. The chain is Carbohydrate sulfotransferase 11 (Chst11) from Mus musculus (Mouse).